The sequence spans 734 residues: Putative K(+)-stimulated pyrophosphate-energized sodium pump (734 aa).

The next 5 membrane-spanning stretches (helical) occupy residues 3-23 (SILF…AYYF), 58-78 (IVGC…YGFH), 82-102 (VWVP…GFLG), 134-154 (VMGL…YLLL), and 169-189 (LCVI…QALF). Lys-199 contributes to the substrate binding site. The Mg(2+) site is built by Asp-202, Asp-206, Asn-229, and Asp-232. Transmembrane regions (helical) follow at residues 244-264 (LYES…AAFI), 275-295 (AVIA…IGIF), 314-334 (FGTN…LWLL), 336-356 (LDNW…GIVI), 377-397 (SGKT…MLST), 398-418 (AIPV…ASGF), and 423-443 (VGMG…TLGI). Asp-455 contacts Mg(2+). 4 helical membrane-spanning segments follow: residues 491–511 (FAIG…IEEI), 557–577 (GMFL…NAVG), 629–649 (ILAP…GLLI), and 650–670 (GGLS…GAWD). Ca(2+) contacts are provided by Asp-670, Asp-696, and Asp-700. Lys-703 is a substrate binding site. The chain crosses the membrane as a helical span at residues 712–732 (ILIKLMSMVAIVMAGLTVAWS).

This sequence belongs to the H(+)-translocating pyrophosphatase (TC 3.A.10) family. K(+)-stimulated subfamily. In terms of assembly, homodimer. Requires Mg(2+) as cofactor.

Its subcellular location is the cell inner membrane. It catalyses the reaction Na(+)(in) + diphosphate + H2O = Na(+)(out) + 2 phosphate + H(+). Its activity is regulated as follows. Requires K(+) for maximal activity. In terms of biological role, sodium pump that utilizes the energy of pyrophosphate hydrolysis as the driving force for Na(+) movement across the membrane. This Bacteroides thetaiotaomicron (strain ATCC 29148 / DSM 2079 / JCM 5827 / CCUG 10774 / NCTC 10582 / VPI-5482 / E50) protein is Putative K(+)-stimulated pyrophosphate-energized sodium pump.